Reading from the N-terminus, the 570-residue chain is La-related protein 7 (570 aa).

An N-acetylmethionine modification is found at Met-1. The segment covering 1 to 16 (METENQKTMEESTKRK) has biased composition (basic and acidic residues). Disordered stretches follow at residues 1–24 (METENQKTMEESTKRKEEKKKRSR) and 180–364 (LNNP…ERHK). An HTH La-type RNA-binding domain is found at 22–116 (RSRVKQVLAD…KPLGERPKDE (95 aa)). The RRM domain occupies 119–197 (RTVYVELLPK…PRKPGIFPKT (79 aa)). Basic residues predominate over residues 213 to 222 (KKKKKKKGRI). Residue Lys-231 forms a Glycyl lysine isopeptide (Lys-Gly) (interchain with G-Cter in SUMO2) linkage. A Phosphothreonine modification is found at Thr-251. Phosphoserine is present on residues Ser-253 and Ser-256. Residue Thr-260 is modified to Phosphothreonine. The span at 286–295 (RAGKRERCSA) shows a compositional bias: basic and acidic residues. Phosphoserine occurs at positions 294 and 334. Thr-335 bears the Phosphothreonine mark. Residues 340–349 (ETDRKGDSLS) are compositionally biased toward basic and acidic residues. Position 347 is a phosphoserine (Ser-347). Over residues 350–363 (KVKRKHKKKHKERH) the composition is skewed to basic residues. Lys-406 is covalently cross-linked (Glycyl lysine isopeptide (Lys-Gly) (interchain with G-Cter in SUMO2)). The xRRM domain maps to 438-551 (QFVTGVIVKI…TEKLITKAEK (114 aa)).

It belongs to the LARP7 family. As to quaternary structure, core component of the 7SK RNP complex, at least composed of 7SK RNA, LARP7, MEPCE, HEXIM1 (or HEXIM2) and P-TEFb (composed of CDK9 and CCNT1/cyclin-T1). Interacts with METTL16. Interacts with RBM7; upon genotoxic stress this interaction is enhanced, triggering the release of inactive P-TEFb complex from the core, yielding to P-TEFb complex activation. Associates with box C/D small nucleolar ribonucleoprotein (snoRNP) complexes.

Its subcellular location is the nucleus. The protein resides in the nucleoplasm. Functionally, RNA-binding protein that specifically binds distinct small nuclear RNA (snRNAs) and regulates their processing and function. Specifically binds the 7SK snRNA (7SK RNA) and acts as a core component of the 7SK ribonucleoprotein (RNP) complex, thereby acting as a negative regulator of transcription elongation by RNA polymerase II. The 7SK RNP complex sequesters the positive transcription elongation factor b (P-TEFb) in a large inactive 7SK RNP complex preventing RNA polymerase II phosphorylation and subsequent transcriptional elongation. The 7SK RNP complex also promotes snRNA gene transcription by RNA polymerase II via interaction with the little elongation complex (LEC). LARP7 specifically binds to the highly conserved 3'-terminal U-rich stretch of 7SK RNA; on stimulation, remains associated with 7SK RNA, whereas P-TEFb is released from the complex. LARP7 also acts as a regulator of mRNA splicing fidelity by promoting U6 snRNA processing. Specifically binds U6 snRNAs and associates with a subset of box C/D RNP complexes: promotes U6 snRNA 2'-O-methylation by facilitating U6 snRNA loading into box C/D RNP complexes. U6 snRNA 2'-O-methylation is required for mRNA splicing fidelity. Binds U6 snRNAs with a 5'-CAGGG-3' sequence motif. U6 snRNA processing is required for spermatogenesis. The sequence is that of La-related protein 7 from Mus musculus (Mouse).